Here is a 705-residue protein sequence, read N- to C-terminus: Solute carrier family 12 member 8 (705 aa).

11 helical membrane passes run 38-58 (FGTW…VVLF), 69-89 (GVLL…ITVL), 92-112 (IGVA…ISSV), 121-141 (VGLL…TGFA), 159-179 (ISVA…KWII), 181-201 (LQLL…VGSF), 232-252 (FFTV…GFNM), 268-288 (LAAV…LGAV), 306-326 (LVGF…CMGG), 368-388 (LVTM…VVTI), and 390-410 (FMLT…AHCG). Positions 472 to 512 (ESRQLGSREGNNPKNQKRKGKKGAKQTLQDSFLLDPGSPLS) are disordered. A compositionally biased stretch (basic residues) spans 486 to 495 (NQKRKGKKGA). The next 2 helical transmembrane spans lie at 587 to 607 (WVSL…QWLY) and 612 to 632 (MGVA…LYLG).

The protein belongs to the SLC12A transporter family.

The protein localises to the membrane. Cation/chloride cotransporter that may play a role in the control of keratinocyte proliferation. This is Solute carrier family 12 member 8 (Slc12a8) from Mus musculus (Mouse).